A 364-amino-acid chain; its full sequence is MKKAILMMTFGSPEEITFEGVADFFTNIRRGVRPQDHEIQTLYDNYVRIGGTPLQKITRQEVALVEARLGNEYSVYFANKFSSPFIPDVIGQMEADGIEQCICLILEPHYSFYSVMGYEKFLESKQIQFLVIKDWYQEEALLNYWADEIAKILKEEVKQDSFKVIFSAHSVPIFALDFGDPYIDQIFENSKLVAEKLGLSSEQYTNTWQSESDIGIPWIKPDVLEYLREQTEHPDHYIFVPISFISEHIEVLFDNDVECYDLCQEFGVNYHRPPMPNTDSRLIDALVNTVRVNENQEFKEFLPEEETFDELVPSDETKNILAESEDLQMPEFVKKLIEKKGRENVKMPYLIKKMLEKAGKLPKE.

R29 and Y118 together coordinate Fe-coproporphyrin III. Positions 169 and 250 each coordinate Fe(2+).

This sequence belongs to the ferrochelatase family.

The protein localises to the cytoplasm. It catalyses the reaction Fe-coproporphyrin III + 2 H(+) = coproporphyrin III + Fe(2+). The protein operates within porphyrin-containing compound metabolism; protoheme biosynthesis. Involved in coproporphyrin-dependent heme b biosynthesis. Catalyzes the insertion of ferrous iron into coproporphyrin III to form Fe-coproporphyrin III. This Streptococcus pneumoniae (strain ATCC 700669 / Spain 23F-1) protein is Coproporphyrin III ferrochelatase.